The primary structure comprises 138 residues: Acidic phospholipase A2 CoaPLA2 (138 aa).

Residues 1–16 (MRTLWIVAVLLLGVEG) form the signal peptide. Disulfide bonds link cysteine 42/cysteine 131, cysteine 44/cysteine 60, cysteine 59/cysteine 111, cysteine 65/cysteine 138, cysteine 66/cysteine 104, cysteine 73/cysteine 97, and cysteine 91/cysteine 102. Ca(2+) contacts are provided by tyrosine 43, glycine 45, and glycine 47. The active site involves histidine 63. Aspartate 64 serves as a coordination point for Ca(2+). Aspartate 105 is a catalytic residue.

It belongs to the phospholipase A2 family. Group II subfamily. D49 sub-subfamily. As to quaternary structure, homodimer. The cofactor is Ca(2+). In terms of tissue distribution, expressed by the venom gland.

It localises to the secreted. It carries out the reaction a 1,2-diacyl-sn-glycero-3-phosphocholine + H2O = a 1-acyl-sn-glycero-3-phosphocholine + a fatty acid + H(+). Snake venom phospholipase A2 (PLA2) that shows very low inhibition of ADP-induced platelet aggregation in platelet-rich plasma of human, rabbit and guinea pig. Shows edema-inducing activity and myotoxicity. PLA2 catalyzes the calcium-dependent hydrolysis of the 2-acyl groups in 3-sn-phosphoglycerides. This is Acidic phospholipase A2 CoaPLA2 from Crotalus lutosus abyssus (Grand Canyon rattlesnake).